Reading from the N-terminus, the 95-residue chain is Protein TusB (95 aa).

It belongs to the DsrH/TusB family. In terms of assembly, heterohexamer, formed by a dimer of trimers. The hexameric TusBCD complex contains 2 copies each of TusB, TusC and TusD. The TusBCD complex interacts with TusE.

It localises to the cytoplasm. Functionally, part of a sulfur-relay system required for 2-thiolation of 5-methylaminomethyl-2-thiouridine (mnm(5)s(2)U) at tRNA wobble positions. The sequence is that of Protein TusB from Buchnera aphidicola subsp. Schizaphis graminum (strain Sg).